Reading from the N-terminus, the 53-residue chain is Large ribosomal subunit protein bL33B (53 aa).

The protein belongs to the bacterial ribosomal protein bL33 family.

In Sorangium cellulosum (strain So ce56) (Polyangium cellulosum (strain So ce56)), this protein is Large ribosomal subunit protein bL33B.